A 645-amino-acid chain; its full sequence is Putative galactocerebrosidase (645 aa).

A signal peptide spans 1-16; the sequence is MFSIFIKIILILPSIA. 2 residues coordinate substrate: T87 and W128. N-linked (GlcNAc...) asparagine glycosylation is present at N141. N171 provides a ligand contact to substrate. The active-site Proton donor/acceptor is the E172. Residues N174 and N193 are each glycosylated (N-linked (GlcNAc...) asparagine). Catalysis depends on E248, which acts as the Nucleophile. C261 and C365 are disulfide-bonded. N274, N395, N411, N532, N616, N620, and N638 each carry an N-linked (GlcNAc...) asparagine glycan.

Belongs to the glycosyl hydrolase 59 family.

The enzyme catalyses a beta-D-Gal-(1&lt;-&gt;1')-ceramide + H2O = an N-acyl-sphingoid base + D-galactose. It catalyses the reaction a beta-D-galactosyl-(1&lt;-&gt;1')-N-acylsphing-4-enine + H2O = an N-acylsphing-4-enine + D-galactose. Functionally, hydrolyzes the galactose ester bonds of galactosylceramide, galactosylsphingoid base, lactosylceramide, and monogalactosyldiglyceride. C.elegans contain specific sphingoid bases, which are unique or different in structure compared to the sphingoid bases found in other animals. Two examples of these distinctive compounds are: 15-methylhexadecasphinganine and 15-methylhexadecasphing-4-enine. This Caenorhabditis elegans protein is Putative galactocerebrosidase.